A 474-amino-acid chain; its full sequence is Homocitrate synthase, mitochondrial (474 aa).

One can recognise a Pyruvate carboxyltransferase domain in the interval 67–320 (FQIIESTLRE…KSKYKLEKLK (254 aa)). R75 contacts 2-oxoglutarate. Residue E76 coordinates Mg(2+). 3 residues coordinate 2-oxoglutarate: H135, R195, and T229. Residues H256 and H258 each contribute to the Mg(2+) site. Residue H353 is the Proton acceptor of the active site.

It belongs to the alpha-IPM synthase/homocitrate synthase family. Homocitrate synthase LYS20/LYS21 subfamily. It depends on Mg(2+) as a cofactor. The cofactor is Mn(2+).

The protein localises to the mitochondrion. The catalysed reaction is acetyl-CoA + 2-oxoglutarate + H2O = (2R)-homocitrate + CoA + H(+). The protein operates within amino-acid biosynthesis; L-lysine biosynthesis via AAA pathway; L-alpha-aminoadipate from 2-oxoglutarate: step 1/5. In terms of biological role, catalyzes the aldol-type condensation of 2-oxoglutarate with acetyl-CoA to yield homocitrate. Carries out the first step of the alpha-aminoadipate (AAA) lysine biosynthesis pathway. The polypeptide is Homocitrate synthase, mitochondrial (lys1) (Penicillium rubens (strain ATCC 28089 / DSM 1075 / NRRL 1951 / Wisconsin 54-1255) (Penicillium chrysogenum)).